A 3563-amino-acid polypeptide reads, in one-letter code: D-lysergyl-peptide-synthetase subunit 1 (3563 aa).

An adenylation (A) domain 1 region spans residues 307-706; the sequence is SCSPRPNPQA…LGRKDDQVKI (400 aa). One can recognise a Carrier 1 domain in the interval 844–921; that stretch reads EPKSDREKLL…EIVIVSTSAT (78 aa). At Ser-881 the chain carries O-(pantetheine 4'-phosphoryl)serine. A condensation (C) domain 1 region spans residues 963–1354; sequence EDIYPCTHLQ…EHILTEIHSN (392 aa). Positions 1397-1804 are adenylation (A) domain 2; the sequence is QEKCQAQPDA…RRKDAQVKIR (408 aa). The Carrier 2 domain occupies 1944-2020; it reads PPSNATEHEI…KLALARGVTQ (77 aa). At Ser-1981 the chain carries O-(pantetheine 4'-phosphoryl)serine. The tract at residues 2067 to 2486 is condensation (C) domain 2; that stretch reads ERIYPCSPIQ…ALPVLDEDQM (420 aa). The segment at 2511–2909 is adenylation (A) domain 3; sequence QCIRCPDSPS…GRNDDQVKVR (399 aa). A Carrier 3 domain is found at 3025–3104; it reads PPRTALEAEL…RFGSYRRAGA (80 aa). Ser-3064 carries the O-(pantetheine 4'-phosphoryl)serine modification. The interval 3166–3451 is cyclization (Cyc) domain; the sequence is LYFSKPMASE…VAKSTTWSSD (286 aa).

It belongs to the NRP synthetase family.

It functions in the pathway alkaloid biosynthesis; ergot alkaloid biosynthesis. In terms of biological role, D-lysergyl-peptide-synthetase subunit 1; part of the gene cluster that mediates the biosynthesis of fungal ergot alkaloid. DmaW catalyzes the first step of ergot alkaloid biosynthesis by condensing dimethylallyl diphosphate (DMAP) and tryptophan to form 4-dimethylallyl-L-tryptophan. The second step is catalyzed by the methyltransferase easF that methylates 4-dimethylallyl-L-tryptophan in the presence of S-adenosyl-L-methionine, resulting in the formation of 4-dimethylallyl-L-abrine. The catalase easC and the FAD-dependent oxidoreductase easE then transform 4-dimethylallyl-L-abrine to chanoclavine-I which is further oxidized by easD in the presence of NAD(+), resulting in the formation of chanoclavine-I aldehyde. Agroclavine dehydrogenase easG then mediates the conversion of chanoclavine-I aldehyde to agroclavine via a non-enzymatic adduct reaction: the substrate is an iminium intermediate that is formed spontaneously from chanoclavine-I aldehyde in the presence of glutathione. The presence of easA is not required to complete this reaction. Further conversion of agroclavine to paspalic acid is a two-step process involving oxidation of agroclavine to elymoclavine and of elymoclavine to paspalic acid, the second step being performed by the elymoclavine oxidase cloA. Paspalic acid is then further converted to D-lysergic acid. Ergopeptines are assembled from D-lysergic acid and three different amino acids by the D-lysergyl-peptide-synthetases composed each of a monomudular and a trimodular nonribosomal peptide synthetase subunit. LpsB and lpsC encode the monomodular subunits responsible for D-lysergic acid activation and incorporation into the ergopeptine backbone. LpsA1 and A2 subunits encode the trimodular nonribosomal peptide synthetase assembling the tripeptide portion of ergopeptines. LpsA1 is responsible for formation of the major ergopeptine, ergotamine, and lpsA2 for alpha-ergocryptine, the minor ergopeptine of the total alkaloid mixture elaborated by C.purpurea. D-lysergyl-tripeptides are assembled by the nonribosomal peptide synthetases and released as N-(D-lysergyl-aminoacyl)-lactams. Cyclolization of the D-lysergyl-tripeptides is performed by the Fe(2+)/2-ketoglutarate-dependent dioxygenase easH which introduces a hydroxyl group into N-(D-lysergyl-aminoacyl)-lactam at alpha-C of the aminoacyl residue followed by spontaneous condensation with the terminal lactam carbonyl group. The chain is D-lysergyl-peptide-synthetase subunit 1 from Claviceps purpurea (Ergot fungus).